The primary structure comprises 310 residues: DNA-directed RNA polymerase subunit alpha (310 aa).

The tract at residues 1-230 (MLGKVNGVQI…KLFNPLRVLD (230 aa)) is alpha N-terminal domain (alpha-NTD). The segment at 242–310 (NSLIKQKLIE…YKKFGVKLKH (69 aa)) is alpha C-terminal domain (alpha-CTD).

The protein belongs to the RNA polymerase alpha chain family. In plastids the minimal PEP RNA polymerase catalytic core is composed of four subunits: alpha, beta, beta', and beta''. When a (nuclear-encoded) sigma factor is associated with the core the holoenzyme is formed, which can initiate transcription.

It localises to the plastid. Its subcellular location is the chloroplast. It catalyses the reaction RNA(n) + a ribonucleoside 5'-triphosphate = RNA(n+1) + diphosphate. DNA-dependent RNA polymerase catalyzes the transcription of DNA into RNA using the four ribonucleoside triphosphates as substrates. This Cyanidium caldarium (Red alga) protein is DNA-directed RNA polymerase subunit alpha.